The chain runs to 232 residues: Octanoyltransferase (232 aa).

Residues 32–219 (NIIYDTLILL…SFKVFNFSSY (188 aa)) form the BPL/LPL catalytic domain. Substrate-binding positions include 77-84 (RGGDITYH), 140-142 (AIG), and 153-155 (GFA). Cysteine 171 functions as the Acyl-thioester intermediate in the catalytic mechanism.

The protein belongs to the LipB family.

Its subcellular location is the cytoplasm. It carries out the reaction octanoyl-[ACP] + L-lysyl-[protein] = N(6)-octanoyl-L-lysyl-[protein] + holo-[ACP] + H(+). The protein operates within protein modification; protein lipoylation via endogenous pathway; protein N(6)-(lipoyl)lysine from octanoyl-[acyl-carrier-protein]: step 1/2. Functionally, catalyzes the transfer of endogenously produced octanoic acid from octanoyl-acyl-carrier-protein onto the lipoyl domains of lipoate-dependent enzymes. Lipoyl-ACP can also act as a substrate although octanoyl-ACP is likely to be the physiological substrate. This Dictyoglomus turgidum (strain DSM 6724 / Z-1310) protein is Octanoyltransferase.